Reading from the N-terminus, the 1448-residue chain is ABC transporter G family member 9 (1448 aa).

The segment covering 16–28 has biased composition (polar residues); it reads EGGSNLNINTPSG. Positions 16–41 are disordered; the sequence is EGGSNLNINTPSGMSDGDFNSGANSP. Residues 136-385 enclose the ABC transporter 1 domain; that stretch reads LFKPSTWKIE…FLDLGFDCEP (250 aa). Positions 490–717 constitute an ABC transmembrane type-2 1 domain; sequence WGDKFSLVSR…APYDNSVRVC (228 aa). 7 helical membrane passes run 494–514, 530–550, 579–599, 604–624, 634–654, 663–683, and 748–768; these read FSLV…GSVF, AIFA…FATF, IPLT…MFGL, GKFF…TNMF, LYVS…YCGY, PWFG…ALMA, and LNIF…MVAV. The 245-residue stretch at 822 to 1066 folds into the ABC transporter 2 domain; sequence FTWENIKYTV…LTSYFERQGV (245 aa). Residue 858–865 coordinates ATP; the sequence is GSSGAGKT. Transmembrane regions (helical) follow at residues 1157 to 1177, 1191 to 1211, 1233 to 1253, 1272 to 1292, 1299 to 1319, and 1422 to 1442; these read FYAY…GFTF, IFFI…VMVQ, FAIS…SVFF, FYFW…GGAI, MFLA…FCGV, and IAIL…FVYL. The ABC transmembrane type-2 2 domain occupies 1157–1389; the sequence is FYAYGSILQA…VPATGYVTNT (233 aa).

The protein belongs to the ABC transporter superfamily. ABCG family. PDR (TC 3.A.1.205) subfamily.

The protein localises to the membrane. This chain is ABC transporter G family member 9 (abcG9), found in Dictyostelium discoideum (Social amoeba).